The chain runs to 478 residues: Zinc metalloproteinase/disintegrin (478 aa).

The first 20 residues, 1-20 (MIQVLLVTICLAVFPYQGSS), serve as a signal peptide directing secretion. A propeptide spanning residues 21-194 (KTLKSGNVND…KASQLNLTPE (174 aa)) is cleaved from the precursor. Gln195 bears the Pyrrolidone carboxylic acid mark. The 197-residue stretch at 201–397 (RYIELVIVAD…RNPQCILNQP (197 aa)) folds into the Peptidase M12B domain. Ca(2+)-binding residues include Glu204 and Asp288. 3 disulfide bridges follow: Cys312–Cys392, Cys352–Cys376, and Cys354–Cys359. Residue His337 coordinates Zn(2+). Glu338 is an active-site residue. Residues His341 and His347 each coordinate Zn(2+). Ca(2+) contacts are provided by Cys392 and Asn395. Residues 398-413 (LRTDTVSTPVSGNELL) constitute a propeptide that is removed on maturation. Residues 405–478 (TPVSGNELLQ…SDCPRNPYKD (74 aa)) form the Disintegrin domain. 4 disulfide bridges follow: Cys420-Cys443, Cys434-Cys440, Cys439-Cys464, and Cys452-Cys471. The short motif at 456 to 458 (VGD) is the Cell attachment site; atypical (VGD) element.

The protein belongs to the venom metalloproteinase (M12B) family. P-II subfamily. P-IIe sub-subfamily. In terms of assembly, monomer (metalloproteinase). Heterodimer; disulfide-linked (disintegrin). It depends on Zn(2+) as a cofactor. In terms of tissue distribution, expressed by the venom gland.

Its subcellular location is the secreted. With respect to regulation, fibrinolytic and caseinolytic activities are inhibited by Cd(2+), Cu(2+) and Co(2+) ions. Not inhibited by Mg(2+), Ca(2+) and Ba(2+). Also inhibited by EDTA, EGTA and 1,10-phenanthroline. Its function is as follows. Fibrinolytic and fibrinogenolytic metalloproteinase that hydrolyzes the Aalpha-chain and more slowly the Bbeta-chain of fibrin and fibrinogen. Its fibrinolytic activity is direct, without any plasminogen activation. Also hydrolyzes casein and B-chain of oxidized insulin. Inhibits ADP-induced and collagen-induced platelet aggregation. Shows low hemorrhagic activity. Cleaves the plasma proteinase inhibitors alpha(2)-macroglobulin (A2M) and pregnancy zone protein (PZP), and is inhibited by them. The metalloprotease has no strict P1-P1' specificity requirement. Hydrolysis at sites with a Pro residue at P1 is observed with bradykinin, substance P, PZP and alpha chain fibrinogen (FGA). Poor inhibitor of platelet aggregation. The disintegrin inhibits the adhesion of the alpha-4/beta-1 (ITGA4/ITGB1) integrin to VCAM-1. Inhibition on alpha-2b/beta-3 (ITGA2B/ITGB3) is low. This is Zinc metalloproteinase/disintegrin from Macrovipera lebetinus (Levantine viper).